Reading from the N-terminus, the 629-residue chain is Smc-like protein Sph1 (629 aa).

2 coiled-coil regions span residues 139–282 (LETE…LLDD) and 318–487 (AETT…NQFD).

The protein belongs to the Sph1/Sph2 family.

The protein resides in the cytoplasm. Functionally, may play a role in a late step of replication. The polypeptide is Smc-like protein Sph1 (sph1) (Halobacterium salinarum (Halobacterium halobium)).